Reading from the N-terminus, the 3411-residue chain is Genome polyprotein (3411 aa).

The Cytoplasmic portion of the chain corresponds to 1–104 (MSGRKAQGKT…LSSRKRRSHD (104 aa)). Residues 38–72 (PGPSRGVQGFIFFFLFNILTGKKITAQLKRLWKML) are hydrophobic; homodimerization of capsid protein C. The propeptide at 102–121 (SHDVLTVQFLILGMLLMTGG) is ER anchor for the capsid protein C, removed in mature form by serine protease NS3. Residues 105 to 125 (VLTVQFLILGMLLMTGGVTLM) form a helical membrane-spanning segment. The Extracellular portion of the chain corresponds to 126-244 (RKNRWLLLNV…GERQLQKIER (119 aa)). Residues Asn134 and Asn150 are each glycosylated (N-linked (GlcNAc...) asparagine; by host). A helical membrane pass occupies residues 245 to 265 (WFVRNPFFAVTALTIAYLVGS). The Cytoplasmic segment spans residues 266–270 (NMTQR). A helical membrane pass occupies residues 271 to 285 (VVIALLVLAVGPAYS). At 286 to 730 (AHCIGVADRD…TVFGSAFQGL (445 aa)) the chain is on the extracellular side. Cystine bridges form between Cys288-Cys315, Cys345-Cys401, Cys345-Cys406, Cys359-Cys390, Cys377-Cys401, Cys377-Cys406, Cys467-Cys568, and Cys585-Cys615. The segment at 383-396 (DRGWGNGCGLFGKG) is fusion peptide. A helical transmembrane segment spans residues 731–751 (FGGLNWITKVIMGAVLIWVGF). Over 752 to 757 (NTRNMT) the chain is Cytoplasmic. A helical membrane pass occupies residues 758–778 (MSMSMILVGVIMMFLSLGVGA). The Extracellular segment spans residues 779–1132 (DQGCAINFGK…LVRSWVTAGE (354 aa)). Disulfide bonds link Cys782–Cys793, Cys833–Cys921, Cys957–Cys1002, Cys1058–Cys1107, Cys1069–Cys1091, and Cys1090–Cys1094. N-linked (GlcNAc...) asparagine; by host glycans are attached at residues Asn908 and Asn986. A helical membrane pass occupies residues 1133-1153 (IHAVPFGLVSMMIAMEVVLRK). Over 1154–1201 (RQGPKQVLVGGVVLLGAMLVGQVTLLDLLELTVAVGLHFHEMNNGGDA) the chain is Cytoplasmic. A helical membrane pass occupies residues 1202-1222 (MYMALIAAFSVRPGLLIGFGL). The Lumenal portion of the chain corresponds to 1223–1287 (RTLWSPRERL…ILPLMALLTP (65 aa)). Residues 1288-1308 (VTMAEVRLATMLFCTVVIIGV) form a helical membrane-spanning segment. At 1309-1355 (LHQNSKDTSMQKTIPLVALTLTSYLGLTQPFLGLCAFLATRIFGRRS) the chain is on the cytoplasmic side. The chain crosses the membrane as a helical span at residues 1356 to 1376 (IPVNEALAATGLVGVLAGLAF). Topologically, residues 1377–1378 (QE) are lumenal. A helical transmembrane segment spans residues 1379–1399 (MENFLGPIAVGGILMMLVSVA). At 1400–1456 (GRVDGLELKKLGEVSWEEEAEISGSSARYDVALSEQGEFKLLSEEKVPWDQVVMTSL) the chain is on the cytoplasmic side. The segment at 1407–1446 (LKKLGEVSWEEEAEISGSSARYDVALSEQGEFKLLSEEKV) is interacts with and activates NS3 protease. The segment at residues 1457–1477 (ALVGAAIHPFALLLVLAGWLF) is an intramembrane region (helical). Residues 1478–2157 (HVRRARRSGD…RNALSMMPEA (680 aa)) are Cytoplasmic-facing. A Peptidase S7 domain is found at 1485–1665 (SGDVLWDIPT…EVKEEGKEEL (181 aa)). Residues His1537, Asp1561, and Ser1622 each act as charge relay system; for serine protease NS3 activity in the active site. Residues 1669-1825 (PTMLKKGKTT…HSNGEIEDVQ (157 aa)) enclose the Helicase ATP-binding domain. Residues 1673–1676 (KKGK) form an important for RNA-binding region. Position 1682-1689 (1682-1689 (FHPGAGKT)) interacts with ATP. The short motif at 1773 to 1776 (DEAH) is the DEAH box element. One can recognise a Helicase C-terminal domain in the interval 1820–1997 (EIEDVQTDIP…VRGGMVAPLY (178 aa)). Lys1877 bears the N6-acetyllysine; by host mark. A disordered region spans residues 1942–1961 (AAQRRGRIGRNPNRDGDSYY). The chain crosses the membrane as a helical span at residues 2158–2178 (MTIVMLFLLAGLLTSGMVIFF). Topologically, residues 2179 to 2186 (MSPKGISR) are lumenal. Residues 2187-2207 (MSMAKGTMAGCGYLMFLGGVE) constitute an intramembrane region (helical). The Lumenal segment spans residues 2208–2209 (PT). The helical transmembrane segment at 2210–2230 (HISYIMLIFFVLMVVVIPEPG) threads the bilayer. At 2231-2241 (QQRSIQDNQVA) the chain is on the cytoplasmic side. A helical membrane pass occupies residues 2242-2256 (FLIIGILTLVSVVAA). Residues 2257 to 2293 (NELGMLEKTKEDLFGKKNLIPSGASPWSWPDLDLKPG) lie on the Lumenal side of the membrane. The helical intramembrane region spans 2294–2314 (AAWTVYVGIVTMLSPMLHHWI). The Lumenal portion of the chain corresponds to 2315–2360 (KVEYGNLSLSGIAQSASVLSFMDKGIPFMKMNISVIMLLVSGWNSI). A helical membrane pass occupies residues 2361 to 2380 (TVMPLLCGIGCAMLHWSLIL). Residues 2381–2421 (PGIKAQQSKLAQRRVFHGVAKNPVVDGNPTVDIEEAPEMPA) are Cytoplasmic-facing. A helical transmembrane segment spans residues 2422–2442 (LYEKKLALYLLLALSLASVAM). Residues 2443-2445 (CRT) lie on the Lumenal side of the membrane. Residues 2446–2466 (PFSLDEGIVLASAALGPLIEG) form a helical membrane-spanning segment. The Cytoplasmic portion of the chain corresponds to 2467–3411 (NTSLLWNGPM…DADLQPGELI (945 aa)). Positions 2507–2771 (GTANGKTLGE…DVTLPIGTRS (265 aa)) constitute an mRNA cap 0-1 NS5-type MT domain. Residue Ser2562 participates in S-adenosyl-L-methionine binding. Position 2562 is a phosphoserine (Ser2562). Lys2567 acts as the For 2'-O-MTase activity in catalysis. Gly2592, Trp2593, Thr2610, Leu2611, Asp2637, and Val2638 together coordinate S-adenosyl-L-methionine. Asp2652 serves as the catalytic For 2'-O-MTase activity. An S-adenosyl-L-methionine-binding site is contributed by Ile2653. Residues Lys2688 and Glu2724 each act as for 2'-O-MTase activity in the active site. An S-adenosyl-L-methionine-binding site is contributed by Tyr2726. Positions 2878–2911 (RKIMKVVNRWLFRHLAREKNPRLCTKEEFIAKVR) match the Nuclear localization signal motif. Zn(2+) contacts are provided by Glu2945, His2949, Cys2954, and Cys2957. Residues 3035 to 3187 (GGLYADDTAG…RPIDDRFGLA (153 aa)) form the RdRp catalytic domain. 3 residues coordinate Zn(2+): His3222, Cys3238, and Cys3357.

This sequence in the N-terminal section; belongs to the class I-like SAM-binding methyltransferase superfamily. mRNA cap 0-1 NS5-type methyltransferase family. Homodimer. Interacts (via N-terminus) with host EXOC1 (via C-terminus); this interaction results in EXOC1 degradation through the proteasome degradation pathway. As to quaternary structure, forms heterodimers with envelope protein E in the endoplasmic reticulum and Golgi. In terms of assembly, homodimer; in the endoplasmic reticulum and Golgi. Interacts with protein prM. Interacts with non-structural protein 1. Homodimer; Homohexamer when secreted. Interacts with envelope protein E. As to quaternary structure, interacts (via N-terminus) with serine protease NS3. In terms of assembly, forms a heterodimer with serine protease NS3. May form homooligomers. Forms a heterodimer with NS2B. Interacts with non-structural protein 2A (via N-terminus). Interacts with NS4B. Interacts with unphosphorylated RNA-directed RNA polymerase NS5; this interaction stimulates RNA-directed RNA polymerase NS5 guanylyltransferase activity. NS3 interacts with host PDCD6IP; this interaction contributes to virion release. As to quaternary structure, interacts with serine protease NS3. In terms of assembly, homodimer. Interacts with host STAT2; this interaction prevents the establishment of cellular antiviral state. Interacts with serine protease NS3. Interacts with host TRIM23; this interaction leads to NS5 ubiquitination. In terms of processing, specific enzymatic cleavages in vivo yield mature proteins. The nascent capsid protein C contains a C-terminal hydrophobic domain that act as a signal sequence for translocation of prM into the lumen of the ER. Mature capsid protein C is cleaved at a site upstream of this hydrophobic domain by NS3. prM is cleaved in post-Golgi vesicles by a host furin, releasing the mature small envelope protein M, and peptide pr. Non-structural protein 2A-alpha, a C-terminally truncated form of non-structural protein 2A, results from partial cleavage by NS3. Specific enzymatic cleavages in vivo yield mature proteins peptide 2K acts as a signal sequence and is removed from the N-terminus of NS4B by the host signal peptidase in the ER lumen. Signal cleavage at the 2K-4B site requires a prior NS3 protease-mediated cleavage at the 4A-2K site. Cleaved in post-Golgi vesicles by a host furin, releasing the mature small envelope protein M, and peptide pr. This cleavage is incomplete as up to 30% of viral particles still carry uncleaved prM. Post-translationally, N-glycosylated. In terms of processing, N-glycosylated. The excreted form is glycosylated and this is required for efficient secretion of the protein from infected cells. Polyubiquitinated; ubiquitination is probably mediated by host TRIM23 and is prerequisite for NS5-STAT2 interaction. NS5 is not ISGylated or sumoylated. Post-translationally, acetylated by host KAT5. Acetylation modulates NS3 RNA-binding and unwinding activities and plays an important positive role for viral replication. In terms of processing, phosphorylated on serines residues. This phosphorylation may trigger NS5 nuclear localization.

It localises to the virion. Its subcellular location is the host nucleus. The protein localises to the host cytoplasm. The protein resides in the host perinuclear region. It is found in the secreted. It localises to the virion membrane. Its subcellular location is the host endoplasmic reticulum membrane. It catalyses the reaction Selective hydrolysis of -Xaa-Xaa-|-Yaa- bonds in which each of the Xaa can be either Arg or Lys and Yaa can be either Ser or Ala.. The enzyme catalyses RNA(n) + a ribonucleoside 5'-triphosphate = RNA(n+1) + diphosphate. The catalysed reaction is a ribonucleoside 5'-triphosphate + H2O = a ribonucleoside 5'-diphosphate + phosphate + H(+). It carries out the reaction ATP + H2O = ADP + phosphate + H(+). It catalyses the reaction a 5'-end (5'-triphosphoguanosine)-ribonucleoside in mRNA + S-adenosyl-L-methionine = a 5'-end (N(7)-methyl 5'-triphosphoguanosine)-ribonucleoside in mRNA + S-adenosyl-L-homocysteine. The enzyme catalyses a 5'-end (N(7)-methyl 5'-triphosphoguanosine)-ribonucleoside in mRNA + S-adenosyl-L-methionine = a 5'-end (N(7)-methyl 5'-triphosphoguanosine)-(2'-O-methyl-ribonucleoside) in mRNA + S-adenosyl-L-homocysteine + H(+). In terms of biological role, plays a role in virus budding by binding to the cell membrane and gathering the viral RNA into a nucleocapsid that forms the core of a mature virus particle. During virus entry, may induce genome penetration into the host cytoplasm after hemifusion induced by the surface proteins. Can migrate to the cell nucleus where it modulates host functions. Its function is as follows. Inhibits RNA silencing by interfering with host Dicer. Prevents premature fusion activity of envelope proteins in trans-Golgi by binding to envelope protein E at pH6.0. After virion release in extracellular space, gets dissociated from E dimers. Functionally, acts as a chaperone for envelope protein E during intracellular virion assembly by masking and inactivating envelope protein E fusion peptide. prM is the only viral peptide matured by host furin in the trans-Golgi network probably to avoid catastrophic activation of the viral fusion activity in acidic Golgi compartment prior to virion release. prM-E cleavage is inefficient, and many virions are only partially matured. These uncleaved prM would play a role in immune evasion. In terms of biological role, may play a role in virus budding. Exerts cytotoxic effects by activating a mitochondrial apoptotic pathway through M ectodomain. May display a viroporin activity. Its function is as follows. Binds to host cell surface receptor and mediates fusion between viral and cellular membranes. Envelope protein is synthesized in the endoplasmic reticulum in the form of heterodimer with protein prM. They play a role in virion budding in the ER, and the newly formed immature particle is covered with 60 spikes composed of heterodimer between precursor prM and envelope protein E. The virion is transported to the Golgi apparatus where the low pH causes dissociation of PrM-E heterodimers and formation of E homodimers. prM-E cleavage is inefficient, and many virions are only partially matured. These uncleaved prM would play a role in immune evasion. Involved in immune evasion, pathogenesis and viral replication. Once cleaved off the polyprotein, is targeted to three destinations: the viral replication cycle, the plasma membrane and the extracellular compartment. Essential for viral replication. Required for formation of the replication complex and recruitment of other non-structural proteins to the ER-derived membrane structures. Excreted as a hexameric lipoparticle that plays a role against host immune response. Antagonizing the complement function. Binds to the host macrophages and dendritic cells. Inhibits signal transduction originating from Toll-like receptor 3 (TLR3). Functionally, component of the viral RNA replication complex that functions in virion assembly and antagonizes the host immune response. In terms of biological role, required cofactor for the serine protease function of NS3. May have membrane-destabilizing activity and form viroporins. Its function is as follows. Displays three enzymatic activities: serine protease, NTPase and RNA helicase. NS3 serine protease, in association with NS2B, performs its autocleavage and cleaves the polyprotein at dibasic sites in the cytoplasm: C-prM, NS2A-NS2B, NS2B-NS3, NS3-NS4A, NS4A-2K and NS4B-NS5. NS3 RNA helicase binds RNA and unwinds dsRNA in the 3' to 5' direction. Also plays a role in virus assembly. Regulates the ATPase activity of the NS3 helicase activity. NS4A allows NS3 helicase to conserve energy during unwinding. Functionally, functions as a signal peptide for NS4B and is required for the interferon antagonism activity of the latter. In terms of biological role, induces the formation of ER-derived membrane vesicles where the viral replication takes place. Inhibits interferon (IFN)-induced host STAT1 phosphorylation and nuclear translocation, thereby preventing the establishment of cellular antiviral state by blocking the IFN-alpha/beta pathway. Its function is as follows. Replicates the viral (+) and (-) RNA genome, and performs the capping of genomes in the cytoplasm. NS5 methylates viral RNA cap at guanine N-7 and ribose 2'-O positions. Besides its role in RNA genome replication, also prevents the establishment of cellular antiviral state by blocking the interferon-alpha/beta (IFN-alpha/beta) signaling pathway. IFN-I induces binding of NS5 to host IFN-activated transcription factor STAT2, preventing its transcriptional activity. Host TRIM23 is the E3 ligase that interacts with and polyubiquitinates NS5 to promote its binding to STAT2 and trigger IFN-I signaling inhibition. The protein is Genome polyprotein of Aedes aegypti (Yellowfever mosquito).